The primary structure comprises 392 residues: Arogenate dehydratase/prephenate dehydratase 1, chloroplastic (392 aa).

Residues 1-48 (MALRCFPIWVCPQTTHHRSPLMGLAEFDADKRRRFCLWECSSSASQRA) constitute a chloroplast transit peptide. The Prephenate dehydratase domain occupies 107-282 (RISFQGIPGA…NVTRFLILAR (176 aa)). An ACT domain is found at 296–387 (SIVFSLEEGP…SFIRILGCYP (92 aa)).

Expressed in roots, leaves, stems, flowers and siliques.

Its subcellular location is the plastid. The protein localises to the chloroplast stroma. The enzyme catalyses L-arogenate + H(+) = L-phenylalanine + CO2 + H2O. It carries out the reaction prephenate + H(+) = 3-phenylpyruvate + CO2 + H2O. The protein operates within amino-acid biosynthesis; L-phenylalanine biosynthesis; L-phenylalanine from L-arogenate: step 1/1. Its pathway is amino-acid biosynthesis; L-phenylalanine biosynthesis; phenylpyruvate from prephenate: step 1/1. In terms of biological role, converts the prephenate produced from the shikimate-chorismate pathway into phenylalanine. Dehydratase that uses arogenate and prephenate as substrates. Utilzes more efficiently arogenate than prephenate. This chain is Arogenate dehydratase/prephenate dehydratase 1, chloroplastic, found in Arabidopsis thaliana (Mouse-ear cress).